Here is a 496-residue protein sequence, read N- to C-terminus: MLVKTLGAHFAAGQNAKKCSCCALLISLLCVLLLSLNPLPVTSHVTSAGSSTALSSDPNLVLVNKCCEKFEIHVDHECQQVNETDYFQPMFTSYGGEQNRPVKFKFVIGIPNCGSMQMWPIYHYAGSSDKLVLLDDGRLRHYTNAENEAEERHGIQSDYEEDIAGSLEPLYHDYDKGLYCIDKATSSTGEENVLFANICLARKEIKWSDSNFLLRKILNPIFHGISLVILLVIAIIYFILPTLRDLVGNIVTTIAMCLMVSQAADLVRIFTELTSHVSFIVADIILCFSLLAAFFWLNSFGFYIWKTFRSRNVFLRVTDGRKYCYYSAYAWGCTATMAALAVFAHFFLDAESYKQEHMVGEQETIGWLGICIFFAPIACTILVNIFFYVTTRKLINRRTVYGRIAHKLKANFIMFSLMLLVMSIAWLFLIMSWLQMEGLLYAHIVVNALQTPLLLYICVLRQRHVTFLLKKTCCYNEPPSANDWGDELHYMNGNDY.

Residues 1–219 (MLVKTLGAHF…SNFLLRKILN (219 aa)) lie on the Extracellular side of the membrane. An N-linked (GlcNAc...) asparagine glycan is attached at Asn82. A helical transmembrane segment spans residues 220–240 (PIFHGISLVILLVIAIIYFIL). Residues 241–246 (PTLRDL) are Cytoplasmic-facing. A helical transmembrane segment spans residues 247-267 (VGNIVTTIAMCLMVSQAADLV). Residues 268 to 276 (RIFTELTSH) are Extracellular-facing. The chain crosses the membrane as a helical span at residues 277–297 (VSFIVADIILCFSLLAAFFWL). Residues 298 to 327 (NSFGFYIWKTFRSRNVFLRVTDGRKYCYYS) are Cytoplasmic-facing. A helical membrane pass occupies residues 328–348 (AYAWGCTATMAALAVFAHFFL). Residues 349 to 366 (DAESYKQEHMVGEQETIG) lie on the Extracellular side of the membrane. A helical transmembrane segment spans residues 367–387 (WLGICIFFAPIACTILVNIFF). The Cytoplasmic portion of the chain corresponds to 388-411 (YVTTRKLINRRTVYGRIAHKLKAN). A helical transmembrane segment spans residues 412-432 (FIMFSLMLLVMSIAWLFLIMS). Topologically, residues 433–438 (WLQMEG) are extracellular. A helical membrane pass occupies residues 439 to 459 (LLYAHIVVNALQTPLLLYICV). Residues 460–496 (LRQRHVTFLLKKTCCYNEPPSANDWGDELHYMNGNDY) are Cytoplasmic-facing.

The protein belongs to the G-protein coupled receptor 2 family. Mth subfamily.

The protein localises to the cell membrane. In Drosophila melanogaster (Fruit fly), this protein is Probable G-protein coupled receptor Mth-like 5 (mthl5).